We begin with the raw amino-acid sequence, 810 residues long: Lon protease (810 aa).

A Lon N-terminal domain is found at 16–209; sequence YPVPPLRDIV…RVYAFMEGEI (194 aa). Residue 361–368 participates in ATP binding; that stretch reads GPPGVGKT. One can recognise a Lon proteolytic domain in the interval 598–779; sequence EDLVGVTTGL…DDVLKHALVR (182 aa). Active-site residues include Ser685 and Lys728.

The protein belongs to the peptidase S16 family. Homohexamer. Organized in a ring with a central cavity.

It is found in the cytoplasm. It carries out the reaction Hydrolysis of proteins in presence of ATP.. Functionally, ATP-dependent serine protease that mediates the selective degradation of mutant and abnormal proteins as well as certain short-lived regulatory proteins. Required for cellular homeostasis and for survival from DNA damage and developmental changes induced by stress. Degrades polypeptides processively to yield small peptide fragments that are 5 to 10 amino acids long. Binds to DNA in a double-stranded, site-specific manner. Involved in iron uptake. The protein is Lon protease of Azospirillum brasilense.